The sequence spans 771 residues: Post-GPI attachment to proteins factor 6 (771 aa).

A signal peptide spans methionine 1–alanine 34. Over glycine 35–arginine 545 the chain is Extracellular. Residue asparagine 144 is glycosylated (N-linked (GlcNAc...) asparagine). The disordered stretch occupies residues phenylalanine 322–arginine 343. Positions aspartate 334 to arginine 343 are enriched in basic and acidic residues. N-linked (GlcNAc...) asparagine glycans are attached at residues asparagine 407 and asparagine 431. The EGF-like domain maps to proline 497–threonine 533. 3 disulfides stabilise this stretch: cysteine 498–cysteine 508, cysteine 502–cysteine 521, and cysteine 523–cysteine 532. A helical transmembrane segment spans residues alanine 546 to valine 566. Over arginine 567–arginine 568 the chain is Cytoplasmic. Residues phenylalanine 569–alanine 589 form a helical membrane-spanning segment. The Extracellular portion of the chain corresponds to cysteine 590–threonine 605. A helical transmembrane segment spans residues leucine 606–alanine 626. Over arginine 627–lysine 629 the chain is Cytoplasmic. A helical transmembrane segment spans residues threonine 630 to leucine 650. Residues aspartate 651 to arginine 653 lie on the Extracellular side of the membrane. A helical membrane pass occupies residues glycine 654–alanine 674. Residues tyrosine 675–arginine 690 are Cytoplasmic-facing. A helical membrane pass occupies residues tryptophan 691 to serine 711. The Extracellular segment spans residues methionine 712–asparagine 717. A helical membrane pass occupies residues tyrosine 718–proline 738. At proline 739–threonine 771 the chain is on the cytoplasmic side.

The protein belongs to the TMEM8 family. Post-translationally, glycosylated. As to expression, expressed in pancreas, placenta, spleen, liver, kidney, bone marrow, peripheral blood leukocytes and tonsil.

Its subcellular location is the cell membrane. The protein localises to the lysosome membrane. The catalysed reaction is a 1,2-diacyl-sn-glycero-3-phosphocholine + H2O = a 1-acyl-sn-glycero-3-phosphocholine + a fatty acid + H(+). Involved in the lipid remodeling steps of GPI-anchor maturation. Lipid remodeling steps consist in the generation of 2 saturated fatty chains at the sn-2 position of GPI-anchor proteins (GPI-AP). Has phospholipase A2 activity that removes an acyl-chain at the sn-2 position of GPI-anchors during the remodeling of GPI. Required for the shedding of the GPI-AP CRIPTO, but not CFC1, at the cell surface. Shedding of CRIPTO modulates Nodal signaling by allowing soluble CRIPTO to act as a Nodal coreceptor on other cells. Also indirectly involved in the translocation of RAC1 from the cytosol to the plasma membrane by maintaining the steady state amount of CAV1-enriched plasma membrane subdomains, stabilizing RAC1 at the plasma membrane. In contrast to myomaker (TMEM8C), has no fusogenic activity. The protein is Post-GPI attachment to proteins factor 6 of Homo sapiens (Human).